The chain runs to 180 residues: Adenosine 5'-phosphosulfate reductase (180 aa).

4 residues coordinate [4Fe-4S] cluster: cysteine 57, cysteine 58, cysteine 140, and cysteine 143. Cysteine 168 serves as the catalytic Nucleophile; cysteine thiosulfonate intermediate.

The protein belongs to the PAPS reductase family. CysH subfamily. Requires [4Fe-4S] cluster as cofactor.

Its subcellular location is the cytoplasm. The enzyme catalyses [thioredoxin]-disulfide + sulfite + AMP + 2 H(+) = adenosine 5'-phosphosulfate + [thioredoxin]-dithiol. Its pathway is sulfur metabolism; hydrogen sulfide biosynthesis; sulfite from sulfate. In terms of biological role, catalyzes the formation of sulfite from adenosine 5'-phosphosulfate (APS) using thioredoxin as an electron donor. This is Adenosine 5'-phosphosulfate reductase from Rhizobium tropici.